The following is a 170-amino-acid chain: Methanogen homoaconitase small subunit (170 aa).

Positions 24 to 27 (YLRT) match the YLRT motif.

It belongs to the LeuD family. LeuD type 2 subfamily. In terms of assembly, heterotetramer of 2 HacA and 2 HacB proteins. Cannot form a complex with LeuC.

It catalyses the reaction (2R)-homocitrate = (2R,3S)-homoisocitrate. The enzyme catalyses (2R)-homocitrate = cis-homoaconitate + H2O. The catalysed reaction is (2R,3S)-homoisocitrate = cis-homoaconitate + H2O. It carries out the reaction cis-(homo)2aconitate + H2O = (2R,3S)-iso(homo)2citrate. It catalyses the reaction cis-(homo)3aconitate + H2O = (2R,3S)-iso(homo)3citrate. The enzyme catalyses (R)-malate = maleate + H2O. The catalysed reaction is cis-aconitate + H2O = D-threo-isocitrate. It functions in the pathway organic acid metabolism; 2-oxosuberate biosynthesis. Component of a hydro-lyase with broad substrate specificity for cis-unsaturated tricarboxylic acids. Catalyzes both the reversible dehydration of (R)-homocitrate ((R)-2-hydroxybutane-1,2,4-tricarboxylate) to produce cis-homoaconitate ((Z)-but-1-ene-1,2,4-tricarboxylate), and its hydration to homoisocitrate ((1R,2S)-1-hydroxybutane-1,2,4-tricarboxylate). Is also able to hydrate the analogous longer chain substrates cis-homo(2)-aconitate, cis-homo(3)-aconitate, and even the non-physiological cis-homo(4)-aconitate with similar efficiency. These reactions are part of the biosynthesis pathway of coenzyme B. Can also catalyze the hydration of maleate to (R)-malate, and that of cis-aconitate. Cannot catalyze the hydration of citraconate and the dehydration of (S)-homocitrate, citramalate, 2-isopropylmalate, 3-isopropylmalate, citrate or threo-DL-isocitrate. The chain is Methanogen homoaconitase small subunit (hacB) from Methanocaldococcus jannaschii (strain ATCC 43067 / DSM 2661 / JAL-1 / JCM 10045 / NBRC 100440) (Methanococcus jannaschii).